Reading from the N-terminus, the 95-residue chain is Integration host factor subunit beta (95 aa).

This sequence belongs to the bacterial histone-like protein family. In terms of assembly, heterodimer of an alpha and a beta chain.

In terms of biological role, this protein is one of the two subunits of integration host factor, a specific DNA-binding protein that functions in genetic recombination as well as in transcriptional and translational control. This chain is Integration host factor subunit beta, found in Ruegeria sp. (strain TM1040) (Silicibacter sp.).